A 312-amino-acid polypeptide reads, in one-letter code: Methionyl-tRNA formyltransferase (312 aa).

Position 109–112 (109–112) interacts with (6S)-5,6,7,8-tetrahydrofolate; sequence SLLP.

Belongs to the Fmt family.

It carries out the reaction L-methionyl-tRNA(fMet) + (6R)-10-formyltetrahydrofolate = N-formyl-L-methionyl-tRNA(fMet) + (6S)-5,6,7,8-tetrahydrofolate + H(+). In terms of biological role, attaches a formyl group to the free amino group of methionyl-tRNA(fMet). The formyl group appears to play a dual role in the initiator identity of N-formylmethionyl-tRNA by promoting its recognition by IF2 and preventing the misappropriation of this tRNA by the elongation apparatus. The protein is Methionyl-tRNA formyltransferase of Nitrosospira multiformis (strain ATCC 25196 / NCIMB 11849 / C 71).